Reading from the N-terminus, the 736-residue chain is Meiotic expression up-regulated protein 27 (736 aa).

It belongs to the UPF0300 family.

The sequence is that of Meiotic expression up-regulated protein 27 (meu27) from Schizosaccharomyces pombe (strain 972 / ATCC 24843) (Fission yeast).